Here is a 505-residue protein sequence, read N- to C-terminus: GMP synthase [glutamine-hydrolyzing] (505 aa).

Positions 3–190 constitute a Glutamine amidotransferase type-1 domain; the sequence is KVLVVNFGGQ…LRKIARISDV (188 aa). Cys-80 acts as the Nucleophile in catalysis. Catalysis depends on residues His-164 and Glu-166. The GMPS ATP-PPase domain maps to 191–380; that stretch reads WRPEDQITRI…LGLPEDVVYR (190 aa). Position 218–224 (218–224) interacts with ATP; sequence SGGVDST.

The enzyme catalyses XMP + L-glutamine + ATP + H2O = GMP + L-glutamate + AMP + diphosphate + 2 H(+). Its pathway is purine metabolism; GMP biosynthesis; GMP from XMP (L-Gln route): step 1/1. Functionally, catalyzes the synthesis of GMP from XMP. In Pyrobaculum aerophilum (strain ATCC 51768 / DSM 7523 / JCM 9630 / CIP 104966 / NBRC 100827 / IM2), this protein is GMP synthase [glutamine-hydrolyzing].